The sequence spans 250 residues: Indole-3-glycerol phosphate synthase (250 aa).

It belongs to the TrpC family.

The catalysed reaction is 1-(2-carboxyphenylamino)-1-deoxy-D-ribulose 5-phosphate + H(+) = (1S,2R)-1-C-(indol-3-yl)glycerol 3-phosphate + CO2 + H2O. Its pathway is amino-acid biosynthesis; L-tryptophan biosynthesis; L-tryptophan from chorismate: step 4/5. The polypeptide is Indole-3-glycerol phosphate synthase (Bacillus velezensis (strain DSM 23117 / BGSC 10A6 / LMG 26770 / FZB42) (Bacillus amyloliquefaciens subsp. plantarum)).